The following is a 334-amino-acid chain: Cathepsin R (334 aa).

The signal sequence occupies residues 1-17 (MAAVVFIAFLYLGVASG). A propeptide spans 18–114 (VPVLDSSLDA…SIMKREAGSI (97 aa)) (activation peptide). Disulfide bonds link Cys136–Cys179 and Cys170–Cys212. Cys139 is a catalytic residue. Asn269 carries an N-linked (GlcNAc...) asparagine glycan. An intrachain disulfide couples Cys270 to Cys323. Catalysis depends on residues His277 and Asn301.

This sequence belongs to the peptidase C1 family. In terms of tissue distribution, placenta.

It is found in the lysosome. This is Cathepsin R (Ctsr) from Mus musculus (Mouse).